The following is a 96-amino-acid chain: Aspartyl/glutamyl-tRNA(Asn/Gln) amidotransferase subunit C (96 aa).

It belongs to the GatC family. In terms of assembly, heterotrimer of A, B and C subunits.

It carries out the reaction L-glutamyl-tRNA(Gln) + L-glutamine + ATP + H2O = L-glutaminyl-tRNA(Gln) + L-glutamate + ADP + phosphate + H(+). It catalyses the reaction L-aspartyl-tRNA(Asn) + L-glutamine + ATP + H2O = L-asparaginyl-tRNA(Asn) + L-glutamate + ADP + phosphate + 2 H(+). Its function is as follows. Allows the formation of correctly charged Asn-tRNA(Asn) or Gln-tRNA(Gln) through the transamidation of misacylated Asp-tRNA(Asn) or Glu-tRNA(Gln) in organisms which lack either or both of asparaginyl-tRNA or glutaminyl-tRNA synthetases. The reaction takes place in the presence of glutamine and ATP through an activated phospho-Asp-tRNA(Asn) or phospho-Glu-tRNA(Gln). In Bacillus velezensis (strain DSM 23117 / BGSC 10A6 / LMG 26770 / FZB42) (Bacillus amyloliquefaciens subsp. plantarum), this protein is Aspartyl/glutamyl-tRNA(Asn/Gln) amidotransferase subunit C.